Reading from the N-terminus, the 283-residue chain is ATP phosphoribosyltransferase (283 aa).

Belongs to the ATP phosphoribosyltransferase family. Long subfamily. It depends on Mg(2+) as a cofactor.

The protein resides in the cytoplasm. It catalyses the reaction 1-(5-phospho-beta-D-ribosyl)-ATP + diphosphate = 5-phospho-alpha-D-ribose 1-diphosphate + ATP. Its pathway is amino-acid biosynthesis; L-histidine biosynthesis; L-histidine from 5-phospho-alpha-D-ribose 1-diphosphate: step 1/9. Its activity is regulated as follows. Feedback inhibited by histidine. Its function is as follows. Catalyzes the condensation of ATP and 5-phosphoribose 1-diphosphate to form N'-(5'-phosphoribosyl)-ATP (PR-ATP). Has a crucial role in the pathway because the rate of histidine biosynthesis seems to be controlled primarily by regulation of HisG enzymatic activity. The chain is ATP phosphoribosyltransferase from Bifidobacterium longum (strain DJO10A).